Here is an 878-residue protein sequence, read N- to C-terminus: Protein translocase subunit SecA (878 aa).

ATP contacts are provided by residues glutamine 79, 97–101, and aspartate 487; that span reads GEGKT.

It belongs to the SecA family.

It is found in the plastid. Its subcellular location is the chloroplast stroma. It localises to the chloroplast thylakoid membrane. The enzyme catalyses ATP + H2O + cellular proteinSide 1 = ADP + phosphate + cellular proteinSide 2.. In terms of biological role, has a central role in coupling the hydrolysis of ATP to the transfer of proteins across the thylakoid membrane. The polypeptide is Protein translocase subunit SecA (Antithamnion sp. (Red alga)).